The sequence spans 197 residues: Protein SYM1 (197 aa).

4 helical membrane-spanning segments follow: residues 20 to 40, 55 to 75, 97 to 117, and 137 to 157; these read AIMT…LFPT, AVIY…KILN, VDQL…MSIM, and LLTN…VVPL.

Belongs to the peroxisomal membrane protein PXMP2/4 family.

It localises to the mitochondrion inner membrane. Functionally, may be involved in cellular response to stress. Required to maintain mitochondrial DNA (mtDNA) integrity and stability. Required for ethanol metabolism and tolerance during heat shock. This is Protein SYM1 (SYM1) from Saccharomyces cerevisiae (strain ATCC 204508 / S288c) (Baker's yeast).